We begin with the raw amino-acid sequence, 165 residues long: 6,7-dimethyl-8-ribityllumazine synthase (165 aa).

Residues phenylalanine 22, 56–58 (SME), and 80–82 (AVI) each bind 5-amino-6-(D-ribitylamino)uracil. Position 85 to 86 (85 to 86 (ET)) interacts with (2S)-2-hydroxy-3-oxobutyl phosphate. Histidine 88 acts as the Proton donor in catalysis. Phenylalanine 113 is a 5-amino-6-(D-ribitylamino)uracil binding site. Position 127 (arginine 127) interacts with (2S)-2-hydroxy-3-oxobutyl phosphate.

Belongs to the DMRL synthase family.

It catalyses the reaction (2S)-2-hydroxy-3-oxobutyl phosphate + 5-amino-6-(D-ribitylamino)uracil = 6,7-dimethyl-8-(1-D-ribityl)lumazine + phosphate + 2 H2O + H(+). It participates in cofactor biosynthesis; riboflavin biosynthesis; riboflavin from 2-hydroxy-3-oxobutyl phosphate and 5-amino-6-(D-ribitylamino)uracil: step 1/2. Functionally, catalyzes the formation of 6,7-dimethyl-8-ribityllumazine by condensation of 5-amino-6-(D-ribitylamino)uracil with 3,4-dihydroxy-2-butanone 4-phosphate. This is the penultimate step in the biosynthesis of riboflavin. This chain is 6,7-dimethyl-8-ribityllumazine synthase, found in Thermotoga sp. (strain RQ2).